Consider the following 426-residue polypeptide: Serine--tRNA ligase (426 aa).

An L-serine-binding site is contributed by 227–229 (TSE). ATP-binding positions include 258–260 (RKE) and V274. Position 281 (E281) interacts with L-serine. 345–348 (ELTS) is a binding site for ATP. L-serine is bound at residue T380.

It belongs to the class-II aminoacyl-tRNA synthetase family. Type-1 seryl-tRNA synthetase subfamily. As to quaternary structure, homodimer. The tRNA molecule binds across the dimer.

It is found in the cytoplasm. The enzyme catalyses tRNA(Ser) + L-serine + ATP = L-seryl-tRNA(Ser) + AMP + diphosphate + H(+). The catalysed reaction is tRNA(Sec) + L-serine + ATP = L-seryl-tRNA(Sec) + AMP + diphosphate + H(+). Its pathway is aminoacyl-tRNA biosynthesis; selenocysteinyl-tRNA(Sec) biosynthesis; L-seryl-tRNA(Sec) from L-serine and tRNA(Sec): step 1/1. Functionally, catalyzes the attachment of serine to tRNA(Ser). Is also able to aminoacylate tRNA(Sec) with serine, to form the misacylated tRNA L-seryl-tRNA(Sec), which will be further converted into selenocysteinyl-tRNA(Sec). This is Serine--tRNA ligase from Clavibacter sepedonicus (Clavibacter michiganensis subsp. sepedonicus).